Consider the following 267-residue polypeptide: Phosphatidylglycerol--prolipoprotein diacylglyceryl transferase (267 aa).

3 consecutive transmembrane segments (helical) span residues 21–41 (VSLH…YWLG), 60–80 (LLFN…VFFY), and 95–115 (IWEG…AMLW). Arg143 is a binding site for a 1,2-diacyl-sn-glycero-3-phospho-(1'-sn-glycerol). 2 helical membrane-spanning segments follow: residues 203-223 (GSVA…VEYF) and 240-260 (GQLL…VAYY).

Belongs to the Lgt family.

It is found in the cell inner membrane. It catalyses the reaction L-cysteinyl-[prolipoprotein] + a 1,2-diacyl-sn-glycero-3-phospho-(1'-sn-glycerol) = an S-1,2-diacyl-sn-glyceryl-L-cysteinyl-[prolipoprotein] + sn-glycerol 1-phosphate + H(+). Its pathway is protein modification; lipoprotein biosynthesis (diacylglyceryl transfer). Functionally, catalyzes the transfer of the diacylglyceryl group from phosphatidylglycerol to the sulfhydryl group of the N-terminal cysteine of a prolipoprotein, the first step in the formation of mature lipoproteins. The polypeptide is Phosphatidylglycerol--prolipoprotein diacylglyceryl transferase (Glaesserella parasuis serovar 5 (strain SH0165) (Haemophilus parasuis)).